We begin with the raw amino-acid sequence, 311 residues long: Porphobilinogen deaminase (311 aa).

C245 bears the S-(dipyrrolylmethanemethyl)cysteine mark.

This sequence belongs to the HMBS family. In terms of assembly, monomer. It depends on dipyrromethane as a cofactor.

It catalyses the reaction 4 porphobilinogen + H2O = hydroxymethylbilane + 4 NH4(+). Its pathway is porphyrin-containing compound metabolism; protoporphyrin-IX biosynthesis; coproporphyrinogen-III from 5-aminolevulinate: step 2/4. Functionally, tetrapolymerization of the monopyrrole PBG into the hydroxymethylbilane pre-uroporphyrinogen in several discrete steps. The polypeptide is Porphobilinogen deaminase (Acinetobacter baylyi (strain ATCC 33305 / BD413 / ADP1)).